The sequence spans 107 residues: Late embryogenesis abundant protein M10 (107 aa).

The signal sequence occupies residues 1-19 (MGNLMSLVLVALLFSLSLA).

In terms of biological role, may be involved in the acquisition of desiccation tolerance during late phase of embryogenesis. In Arabidopsis thaliana (Mouse-ear cress), this protein is Late embryogenesis abundant protein M10.